An 841-amino-acid chain; its full sequence is Protein translocase subunit SecA (841 aa).

ATP-binding positions include M79–F80, Q85, G103–T107, and D492. The interval R786–V813 is disordered. Zn(2+) contacts are provided by C825, C827, C836, and C837.

It belongs to the SecA family. In terms of assembly, part of the essential Sec protein translocation apparatus which comprises SecA, SecYEG and auxiliary proteins SecDF. Other proteins may be involved. Monomer and many different homodimers can be isolated, some of which are not formed in the presence of a synthetic signal peptide. A single SecA monomer interacts with SecY in the channel. Only shows some colocalization with FloA or FloT membrane assemblies. Zn(2+) serves as cofactor.

It localises to the cell membrane. The protein localises to the cytoplasm. Its subcellular location is the membrane raft. It catalyses the reaction ATP + H2O + cellular proteinSide 1 = ADP + phosphate + cellular proteinSide 2.. In terms of biological role, part of the Sec protein translocase complex. Interacts with the SecYEG preprotein conducting channel. Has a central role in coupling the hydrolysis of ATP to the transfer of proteins into and across the cell membrane, serving as an ATP-driven molecular motor driving the stepwise translocation of polypeptide chains across the membrane. This is Protein translocase subunit SecA from Bacillus subtilis (strain 168).